The primary structure comprises 211 residues: Phosphatidylglycerophosphatase C (211 aa).

Over 1–33 (MATHERRVVFFDLDGTLHQQDMFGSFLRYLLRR) the chain is Cytoplasmic. A helical membrane pass occupies residues 34 to 54 (QPLNALLVLPLLPIIAIALLI). Topologically, residues 55-211 (KGRAARWPMS…TPRGELQQLE (157 aa)) are periplasmic.

The cofactor is Mg(2+).

Its subcellular location is the cell inner membrane. It catalyses the reaction a 1,2-diacyl-sn-glycero-3-phospho-(1'-sn-glycero-3'-phosphate) + H2O = a 1,2-diacyl-sn-glycero-3-phospho-(1'-sn-glycerol) + phosphate. It participates in phospholipid metabolism; phosphatidylglycerol biosynthesis; phosphatidylglycerol from CDP-diacylglycerol: step 2/2. Lipid phosphatase which dephosphorylates phosphatidylglycerophosphate (PGP) to phosphatidylglycerol (PG). The polypeptide is Phosphatidylglycerophosphatase C (pgpC) (Escherichia coli (strain K12)).